The chain runs to 957 residues: Translation initiation factor IF-2 (957 aa).

Disordered regions lie at residues 34-282 (KSHS…RVVK) and 311-367 (SQSL…TIAG). A compositionally biased stretch (pro residues) spans 107–161 (PARPQPPQAPTRPTPPAPVAPKPVEPVAAKPPAPPAKPEPTPPRPVPTLVPPPTR). Residues 163-188 (TKKEEKVAATPPPRKELKEPPKKEKG) show a composition bias toward basic and acidic residues. Positions 209 to 242 (PPAPAKPPEMAPKPALPELQPPPKPVRAPNPPKP) are enriched in pro residues. 2 stretches are compositionally biased toward basic and acidic residues: residues 250 to 259 (LDDKSVSKVI) and 266 to 275 (KDFDEEESKR). In terms of domain architecture, tr-type G spans 444–617 (RRPPVVTIMG…LLVAEVEDLY (174 aa)). Positions 453-460 (GHVDHGKT) are G1. Residue 453–460 (GHVDHGKT) participates in GTP binding. The G2 stretch occupies residues 478 to 482 (GITQH). The tract at residues 503–506 (DTPG) is G3. Residues 503–507 (DTPGH) and 557–560 (NKID) contribute to the GTP site. A G4 region spans residues 557–560 (NKID). Positions 593–595 (SAL) are G5.

The protein belongs to the TRAFAC class translation factor GTPase superfamily. Classic translation factor GTPase family. IF-2 subfamily.

It localises to the cytoplasm. In terms of biological role, one of the essential components for the initiation of protein synthesis. Protects formylmethionyl-tRNA from spontaneous hydrolysis and promotes its binding to the 30S ribosomal subunits. Also involved in the hydrolysis of GTP during the formation of the 70S ribosomal complex. The sequence is that of Translation initiation factor IF-2 from Thermosynechococcus vestitus (strain NIES-2133 / IAM M-273 / BP-1).